A 116-amino-acid chain; its full sequence is Integration host factor subunit alpha (116 aa).

2 disordered regions span residues 58–80 (FGNFQVRDKPPRPGRNPKTGETI) and 94–116 (QKLKSTVEQSGNPAEVSDDEAAE). Positions 94–105 (QKLKSTVEQSGN) are enriched in polar residues.

It belongs to the bacterial histone-like protein family. In terms of assembly, heterodimer of an alpha and a beta chain.

Functionally, this protein is one of the two subunits of integration host factor, a specific DNA-binding protein that functions in genetic recombination as well as in transcriptional and translational control. This is Integration host factor subunit alpha from Bordetella avium (strain 197N).